The following is a 136-amino-acid chain: Pleckstrin homology-like domain family A member 2 (136 aa).

The 94-residue stretch at 12–105 folds into the PH domain; it reads ILKEGDLEKR…WNAEITLALV (94 aa).

This sequence belongs to the PHLDA2 family.

The protein resides in the cytoplasm. The protein localises to the membrane. Its function is as follows. Plays a role in regulating placenta growth. May act via its PH domain that competes with other PH domain-containing proteins, thereby preventing their binding to membrane lipids. This is Pleckstrin homology-like domain family A member 2 (phlda2) from Xenopus tropicalis (Western clawed frog).